Here is a 340-residue protein sequence, read N- to C-terminus: Major histocompatibility complex class I-related protein 1 (340 aa).

Residues 1-22 (MGELTAFLLPLIIVLMVKHSNS) form the signal peptide. An alpha-1 region spans residues 23-109 (RTHSLRYFRL…KRLQRHYNHS (87 aa)). The antigen-binding cleft stretch occupies residues 23–201 (RTHSLRYFRL…EYGKDTLQRT (179 aa)). Over 23-302 (RTHSLRYFRL…QESEAIPLVM (280 aa)) the chain is Extracellular. 8-(9H-purin-6-yl)-2-oxa-8-azabicyclo[3.3.1]nona-3,6-diene-4,6-dicarbaldehyde-binding residues include tyrosine 29 and arginine 31. Arginine 31, serine 46, and lysine 65 together coordinate 5-(2-oxoethylideneamino)-6-(D-ribitylamino)uracil. 5-(2-oxopropylideneamino)-6-(D-ribitylamino)uracil-binding residues include arginine 31, serine 46, and lysine 65. The 7-hydroxy-6-methyl-8-(1-D-ribityl)lumazine site is built by arginine 31, serine 46, and lysine 65. Lysine 65 and histidine 80 together coordinate 8-(9H-purin-6-yl)-2-oxa-8-azabicyclo[3.3.1]nona-3,6-diene-4,6-dicarbaldehyde. Residue lysine 65 participates in 2-amino-4-oxopteridine-6-carbaldehyde binding. Lysine 65 serves as a coordination point for pyridoxal. Residue asparagine 107 is glycosylated (N-linked (GlcNAc...) asparagine). The segment at 110-201 (GSHTYQRMIG…EYGKDTLQRT (92 aa)) is alpha-2. Position 116 (arginine 116) interacts with 8-(9H-purin-6-yl)-2-oxa-8-azabicyclo[3.3.1]nona-3,6-diene-4,6-dicarbaldehyde. 5-(2-oxoethylideneamino)-6-(D-ribitylamino)uracil-binding residues include arginine 116, tyrosine 174, and glutamine 175. 5-(2-oxopropylideneamino)-6-(D-ribitylamino)uracil is bound by residues arginine 116, tyrosine 174, and glutamine 175. Positions 116, 174, and 175 each coordinate 7-hydroxy-6-methyl-8-(1-D-ribityl)lumazine. Cystine bridges form between cysteine 120/cysteine 183 and cysteine 222/cysteine 278. Residues 202–293 (EPPLVRVNRK…GVHVVLQVPQ (92 aa)) form an alpha-3 region. The Ig-like C1-type domain occupies 203 to 282 (PPLVRVNRKE…SNLYSCHVEH (80 aa)). Residues 294-302 (ESEAIPLVM) form a connecting peptide region. The helical transmembrane segment at 303-323 (KAVSGSIVFVIVLAGVGVLVW) threads the bilayer. The Cytoplasmic portion of the chain corresponds to 324–340 (RRRPREQNGAVYLPTPD).

This sequence belongs to the MHC class I family. As to quaternary structure, heterotrimer that consists of MR1, B2M and metabolite antigen. Major classes of metabolite ligands presented by MR1 include riboflavin-related antigens, pyrimidines and ribityl lumazines, nucleobase adducts and folate derivatives. Forms reversible covalent Schiff base complexes with microbial pyrimidine-based metabolite, which serves as a molecular switch triggering complete folding, stable association with B2M and translocation of the ternary complex from endoplasmic reticulum to the plasma membrane. Alternatively, forms non-Schiff base complexes with ribityl lumazines. On antigen-presenting cells, the ternary complex interacts with TCR on MR1-restricted T cells. Interacts with TAPBP and TAPBPL chaperones in the endoplasmic reticulum. TAPBP associated or not with MHC class I peptide loading complex binds ligand-free MR1 or MR1-B2M complex, providing for stable MR1 pools ready for metabolite antigen processing. TAPBPL interacts with MR1 in a ligand-independent way; this interaction may stabilize MR1 pool and facilitate ligand loading and dissociation. Structurally, MR1-B2M heterodimer adopts a topology similar to classical MHC class I molecules, with alpha-1 and alpha-2 domains of MR1 forming the antigen-binding cleft composed of two alpha-helices resting on a floor of 7-stranded anti-parallel beta-pleated sheet. MR1-B2M heterodimer (via alpha-helices) interacts with TCR (via CDR domains). In terms of processing, N-glycosylated.

The protein resides in the cell membrane. The protein localises to the endoplasmic reticulum membrane. It is found in the golgi apparatus membrane. It localises to the early endosome membrane. Its subcellular location is the late endosome membrane. Functionally, antigen-presenting molecule specialized in displaying microbial pyrimidine-based metabolites to alpha-beta T cell receptors (TCR) on innate-type mucosal-associated invariant T (MAIT) cells. In complex with B2M preferentially presents riboflavin-derived metabolites to semi-invariant TCRs on MAIT cells, guiding immune surveillance of the microbial metabolome at mucosal epithelial barriers. Signature pyrimidine-based microbial antigens are generated via non-enzymatic condensation of metabolite intermediates of the riboflavin pathway with by-products arising from other metabolic pathways such as glycolysis. Typical potent antigenic metabolites are 5-(2-oxoethylideneamino)-6-D-ribitylaminouracil (5-OE-RU) and 5-(2-oxopropylideneamino)-6-D-ribitylaminouracil (5-OP-RU), products of condensation of 5-amino-6-D-ribityaminouracil (5-A-RU) with glyoxal or methylglyoxal by-products, respectively. May present microbial antigens to various MAIT cell subsets, providing for unique recognition of diverse microbes, including pathogens that do not synthesize riboflavin. Upon antigen recognition, elicits rapid innate-type MAIT cell activation to eliminate pathogenic microbes by directly killing infected cells. During T cell development, drives thymic selection and post-thymic terminal differentiation of MAIT cells in a process dependent on commensal microflora. Acts as an immune sensor of cancer cell metabolome. May present a tumor-specific or -associated metabolite essential for cancer cell survival to a pan-cancer TCR on a non-MAIT CD8-positive T cell clone, triggering T cell-mediated killing of a wide range of cancer cell types. May present tumor-enriched pyridoxal and pyridoxal 5'-phosphate antigens, enabling preferential recognition of cancer cells. Presents nucleobase carbonyl adducts generated during oxidative stress. Captures M3Ade, a nucleobase adduct composed of one adenine modified by a malondialdehyde trimer, for recognition by MR1-restricted T cell clones expressing a polyclonal TCR repertoire. This is Major histocompatibility complex class I-related protein 1 from Pongo abelii (Sumatran orangutan).